Here is a 272-residue protein sequence, read N- to C-terminus: 5'-nucleotidase SurE (272 aa).

A divalent metal cation-binding residues include Asp28, Asp29, Ser59, and Asn115.

This sequence belongs to the SurE nucleotidase family. It depends on a divalent metal cation as a cofactor.

The protein resides in the cytoplasm. It catalyses the reaction a ribonucleoside 5'-phosphate + H2O = a ribonucleoside + phosphate. In terms of biological role, nucleotidase that shows phosphatase activity on nucleoside 5'-monophosphates. The protein is 5'-nucleotidase SurE of Chlorobium chlorochromatii (strain CaD3).